The sequence spans 161 residues: Regulator of ribonuclease activity A (161 aa).

The protein belongs to the RraA family. Homotrimer. Binds to both RNA-binding sites in the C-terminal region of Rne and to RhlB.

It localises to the cytoplasm. Its function is as follows. Globally modulates RNA abundance by binding to RNase E (Rne) and regulating its endonucleolytic activity. Can modulate Rne action in a substrate-dependent manner by altering the composition of the degradosome. Modulates RNA-binding and helicase activities of the degradosome. The sequence is that of Regulator of ribonuclease activity A from Tolumonas auensis (strain DSM 9187 / NBRC 110442 / TA 4).